The following is a 2048-amino-acid chain: Fanconi anemia group M protein (2048 aa).

A compositionally biased stretch (polar residues) spans 1–37 (MSGRQRTLFQTWGSSISRSSGTPGCSSGTERPQSPGS). The disordered stretch occupies residues 1-45 (MSGRQRTLFQTWGSSISRSSGTPGCSSGTERPQSPGSSKAPLPAA). A Phosphoserine modification is found at S34. The Helicase ATP-binding domain occupies 98–266 (ISRAALFCNT…QVITNLLIGQ (169 aa)). 111-118 (LPTGLGKT) is an ATP binding site. Positions 214–217 (DEAH) match the DEAH box motif. A Helicase C-terminal domain is found at 452–627 (KLEEVVIEHF…VLHFYQRSPR (176 aa)). Positions 661-800 (SIFSYRDGMR…TSTFIAPRNE (140 aa)) are interaction with CENPS/CENPSX. Disordered stretches follow at residues 1433 to 1476 (NVLN…NFPK), 1518 to 1540 (LSEE…EQDS), and 1668 to 1809 (ILPD…HTSL). A compositionally biased stretch (acidic residues) spans 1518 to 1538 (LSEEDAEYVSSDENDESENEQ). Phosphoserine occurs at positions 1673 and 1674. Polar residues-rich tracts occupy residues 1703-1745 (HCLN…ISEV), 1753-1767 (HNEV…TTVD), and 1786-1797 (EDSSTSGASCSK). An interaction with FAAP24 region spans residues 1727 to 2048 (LAKQSKQTSL…LNQDRLKSDI (322 aa)).

The protein belongs to the DEAD box helicase family. DEAH subfamily. FANCM sub-subfamily. As to quaternary structure, component of the Fanconi anemia (FA) core complex, which consists of CENPS, CENPX, FANCA, FANCB, FANCC, FANCE, FANCF, FANCG, FANCL, FANCM, FAAP24 and FAAP100. The FA core complex associates with Bloom syndrome (BLM) complex, which consists of at least BLM, DNA topoisomerase 3-alpha/TOP3A, RMI1/BLAP75, RPA1/RPA70 and RPA2/RPA32. This supercomplex between FA and BLM complexes has been called BRAFT. Forms a discrete complex with CENPS and CENPX, called FANCM-MHF; this interaction stimulates DNA binding and replication fork remodeling by FANCM and stabilizes the binding partners. Forms a heterodimer with FAAP24; this interaction increases FANCM single-stranded DNA-binding activity. Post-translationally, phosphorylated; hyperphosphorylated in response to genotoxic stress. As to expression, expressed in germ cells of fetal and adult ovaries. In fetal ovaries, it is present in oogonia but expression is stronger in pachytene stage oocytes. Expressed in oocytes arrested at the diplotene stage of prophase I during the last trimester of pregnancy and in adults. Expressed in the testis.

The protein localises to the nucleus. The enzyme catalyses ATP + H2O = ADP + phosphate + H(+). Its function is as follows. DNA-dependent ATPase component of the Fanconi anemia (FA) core complex. Required for the normal activation of the FA pathway, leading to monoubiquitination of the FANCI-FANCD2 complex in response to DNA damage, cellular resistance to DNA cross-linking drugs, and prevention of chromosomal breakage. In complex with CENPS and CENPX, binds double-stranded DNA (dsDNA), fork-structured DNA (fsDNA) and Holliday junction substrates. Its ATP-dependent DNA branch migration activity can process branched DNA structures such as a movable replication fork. This activity is strongly stimulated in the presence of CENPS and CENPX. In complex with FAAP24, efficiently binds to single-strand DNA (ssDNA), splayed-arm DNA, and 3'-flap substrates. In vitro, on its own, strongly binds ssDNA oligomers and weakly fsDNA, but does not bind to dsDNA. This chain is Fanconi anemia group M protein (FANCM), found in Homo sapiens (Human).